Here is a 292-residue protein sequence, read N- to C-terminus: Probable 2-(5''-triphosphoribosyl)-3'-dephosphocoenzyme-A synthase (292 aa).

This sequence belongs to the CitG/MdcB family.

The catalysed reaction is 3'-dephospho-CoA + ATP = 2'-(5''-triphospho-alpha-D-ribosyl)-3'-dephospho-CoA + adenine. The protein is Probable 2-(5''-triphosphoribosyl)-3'-dephosphocoenzyme-A synthase of Shigella sonnei (strain Ss046).